The following is a 235-amino-acid chain: Adenosine 5'-phosphosulfate reductase (235 aa).

4 residues coordinate [4Fe-4S] cluster: Cys-121, Cys-122, Cys-204, and Cys-207. Catalysis depends on Cys-230, which acts as the Nucleophile; cysteine thiosulfonate intermediate.

This sequence belongs to the PAPS reductase family. CysH subfamily. [4Fe-4S] cluster serves as cofactor.

The protein localises to the cytoplasm. The catalysed reaction is [thioredoxin]-disulfide + sulfite + AMP + 2 H(+) = adenosine 5'-phosphosulfate + [thioredoxin]-dithiol. It functions in the pathway sulfur metabolism; hydrogen sulfide biosynthesis; sulfite from sulfate. Its function is as follows. Catalyzes the formation of sulfite from adenosine 5'-phosphosulfate (APS) using thioredoxin as an electron donor. The polypeptide is Adenosine 5'-phosphosulfate reductase (Geobacillus sp. (strain WCH70)).